A 391-amino-acid polypeptide reads, in one-letter code: MRKLFTSESVTEGHPDKICDQISDAVLDAILDKDPNGRVACETAVTTGMVMVMGEISTKCYVDIPKLVRETIRGIGYDRAKYGFDCETCSVITSIDEQSVDIAMGVDEALESKKGEMDRLDAVGAGDQGMMFGFATNETKEYMPMPIEMAHKLSRRLSEVRKNGTLPYLRPDGKTQVTVEYENGKPVRIDAIVISTQHGPEVYLEQIEKDIKEHVIKVIVPSELLDENTKYFINPTGRFVVGGPQGDSGLTGRKIIVDTYGGYGRHGGGAFSGKDPTKVDRSAAYAARWVAKNLVAAGVADKLEIQLAYAIGVAKPVSISVDTFGTGKMTDEEIVSIVNKVFDLRPGAIIRDLDLRRPIYKQVAAYGHFGRTDIDVPWERLDKVEEIKKHI.

His-14 contributes to the ATP binding site. Residue Asp-16 coordinates Mg(2+). Position 42 (Glu-42) interacts with K(+). Residues Glu-55 and Gln-98 each contribute to the L-methionine site. The interval 98 to 108 is flexible loop; the sequence is QSVDIAMGVDE. ATP-binding positions include 172–174, 238–239, Asp-247, 253–254, Ala-270, and Lys-274; these read DGK, RF, and RK. Asp-247 contributes to the L-methionine binding site. Residue Lys-278 coordinates L-methionine.

Belongs to the AdoMet synthase family. In terms of assembly, homotetramer; dimer of dimers. The cofactor is Mg(2+). It depends on K(+) as a cofactor.

It localises to the cytoplasm. The catalysed reaction is L-methionine + ATP + H2O = S-adenosyl-L-methionine + phosphate + diphosphate. The protein operates within amino-acid biosynthesis; S-adenosyl-L-methionine biosynthesis; S-adenosyl-L-methionine from L-methionine: step 1/1. In terms of biological role, catalyzes the formation of S-adenosylmethionine (AdoMet) from methionine and ATP. The overall synthetic reaction is composed of two sequential steps, AdoMet formation and the subsequent tripolyphosphate hydrolysis which occurs prior to release of AdoMet from the enzyme. The sequence is that of S-adenosylmethionine synthase from Clostridium botulinum (strain Langeland / NCTC 10281 / Type F).